A 424-amino-acid chain; its full sequence is MDKLRIKGGKSLAGSVDISGAKNAALPELCAALLTAETVTLQNVPGLQDVATMLKLIRNMGVEAERSAHAPGTVILNAGPLSSPEAPYELVKTMRASVLALGPLLARFGEATVSLPGGCAIGSRPVDQHIKGLQAMGADIIVEHGYMLARLPKGQTRLKGAAITTDMVTVTGTENFLMAATLAEGETILENAAQEPEIGDLAEMLIKMGAKIEGHGSRRIRIQGVERLHGCTHQVVADRIETGTFLCAVAAAGGDVVLNHGRADHLEVVIEKLREAGATVTAGEGFIRIQASGRMKAQSFRTTEYPGFPTDMQAQFMALNAIAQGTSTVTETIFENRFMHVNEMVRLGAKIQIEGKVCVINGVEQLSGATVMATDLRASASLVIAGLVASGETFVERIYHLDRGYDQMEAKLRGIGADIERMKA.

A phosphoenolpyruvate-binding site is contributed by 22-23 (KN). Arg-95 provides a ligand contact to UDP-N-acetyl-alpha-D-glucosamine. The Proton donor role is filled by Cys-119. Residue Cys-119 is modified to 2-(S-cysteinyl)pyruvic acid O-phosphothioketal. UDP-N-acetyl-alpha-D-glucosamine-binding positions include 124 to 128 (RPVDQ), Asp-311, and Ile-333.

The protein belongs to the EPSP synthase family. MurA subfamily.

It is found in the cytoplasm. It catalyses the reaction phosphoenolpyruvate + UDP-N-acetyl-alpha-D-glucosamine = UDP-N-acetyl-3-O-(1-carboxyvinyl)-alpha-D-glucosamine + phosphate. The protein operates within cell wall biogenesis; peptidoglycan biosynthesis. Functionally, cell wall formation. Adds enolpyruvyl to UDP-N-acetylglucosamine. The sequence is that of UDP-N-acetylglucosamine 1-carboxyvinyltransferase from Polaromonas naphthalenivorans (strain CJ2).